Here is a 100-residue protein sequence, read N- to C-terminus: MSLNAYLVLAAMLFTIGVFGIFLNRKNVISIMMSIELMLLAVNINFVAFSHYLHDLTGQIFTFFVVTVAAAEAAIGLAILVTFFRNRTTINVEEIDTLKG.

3 consecutive transmembrane segments (helical) span residues 3-23, 29-49, and 60-80; these read LNAY…GIFL, ISIM…FVAF, and IFTF…LAIL.

It belongs to the complex I subunit 4L family. NDH-1 is composed of 14 different subunits. Subunits NuoA, H, J, K, L, M, N constitute the membrane sector of the complex.

The protein localises to the cell inner membrane. It carries out the reaction a quinone + NADH + 5 H(+)(in) = a quinol + NAD(+) + 4 H(+)(out). Functionally, NDH-1 shuttles electrons from NADH, via FMN and iron-sulfur (Fe-S) centers, to quinones in the respiratory chain. The immediate electron acceptor for the enzyme in this species is believed to be ubiquinone. Couples the redox reaction to proton translocation (for every two electrons transferred, four hydrogen ions are translocated across the cytoplasmic membrane), and thus conserves the redox energy in a proton gradient. The protein is NADH-quinone oxidoreductase subunit K of Magnetococcus marinus (strain ATCC BAA-1437 / JCM 17883 / MC-1).